We begin with the raw amino-acid sequence, 534 residues long: ATP synthase subunit beta 2 (534 aa).

Positions 1 to 10 are enriched in polar residues; sequence MADPQATNGT. The disordered stretch occupies residues 1 to 30; it reads MADPQATNGTGAACAERDASDVGDVSDVGD. Position 185–192 (185–192) interacts with ATP; it reads GGAGVGKT. A compositionally biased stretch (basic and acidic residues) spans 494–505; sequence AAAREADARREA. The interval 494–534 is disordered; sequence AAAREADARREAAAAASGAGPGTTSDPASGSAEPQGARHGR.

The protein belongs to the ATPase alpha/beta chains family. In terms of assembly, F-type ATPases have 2 components, CF(1) - the catalytic core - and CF(0) - the membrane proton channel. CF(1) has five subunits: alpha(3), beta(3), gamma(1), delta(1), epsilon(1). CF(0) has three main subunits: a(1), b(2) and c(9-12). The alpha and beta chains form an alternating ring which encloses part of the gamma chain. CF(1) is attached to CF(0) by a central stalk formed by the gamma and epsilon chains, while a peripheral stalk is formed by the delta and b chains.

It localises to the cell inner membrane. The enzyme catalyses ATP + H2O + 4 H(+)(in) = ADP + phosphate + 5 H(+)(out). Functionally, produces ATP from ADP in the presence of a proton gradient across the membrane. The catalytic sites are hosted primarily by the beta subunits. This chain is ATP synthase subunit beta 2, found in Burkholderia pseudomallei (strain 668).